The chain runs to 360 residues: DNA replication and repair protein RecF (360 aa).

Position 30–37 (30–37 (GHNGSGKT)) interacts with ATP.

Belongs to the RecF family.

It is found in the cytoplasm. Its function is as follows. The RecF protein is involved in DNA metabolism; it is required for DNA replication and normal SOS inducibility. RecF binds preferentially to single-stranded, linear DNA. It also seems to bind ATP. This chain is DNA replication and repair protein RecF, found in Actinobacillus pleuropneumoniae serotype 7 (strain AP76).